The following is a 591-amino-acid chain: MEKRTSYCGELNEAHIGQSVVLHGWVQKRRDLGGLIFIDLRDREGIVQVVFNPEFSKEALEIADSVRNEFVVTIKGTVHARGEKAINEKLATGKVEVLAEEITILNTSKTPPFYIEDGVNVSDELRLKYRYLDLRRPEMNNIFKMRHTVTRTFRNKLDALGFFDIETPYLTKSTPEGARDYLVPSRVYPGNFYALPQSPQILKQLLMTAGFDKYYQIVRCFRDEDLRGDRQPEFTQIDLETSFLTKEEIQAITEDMLVDVVKEAKNITIEKPFPRMTYKEAMDRFGSDKPDIRFGLELQNVSDVVKDVDFKVFQSAIENGGEVKAINAKAAAANFSRKDLDALGVFVANYGAKGLAWLKVEAGELKGPIAKFFPEDKAAELKVALQAEDGDLLLFAADKADIVAASLGALRNKLGKDLNLINEEELAFLWVTDWPLFEYDEEAERYVSAHHPFTLPKEEDIPLLETDSSKVMAEAYDIVLNGYEIGGGSLRIYKKEVQESMFRALGFTDESAKEQFGFLMDALEYGTPPHGGIALGLDRIVMILAGRNNLRDTIAFPKTGSAVDPLTNAPGEVSEAQLAELKLETVKKETN.

Residue Glu-176 participates in L-aspartate binding. The aspartate stretch occupies residues 200–203 (QILK). Position 222 (Arg-222) interacts with L-aspartate. ATP contacts are provided by residues 222–224 (RDE) and Gln-231. Residue His-450 participates in L-aspartate binding. Glu-484 is an ATP binding site. Arg-491 is an L-aspartate binding site. 536–539 (GLDR) lines the ATP pocket.

Belongs to the class-II aminoacyl-tRNA synthetase family. Type 1 subfamily. In terms of assembly, homodimer.

Its subcellular location is the cytoplasm. It carries out the reaction tRNA(Asp) + L-aspartate + ATP = L-aspartyl-tRNA(Asp) + AMP + diphosphate. Functionally, catalyzes the attachment of L-aspartate to tRNA(Asp) in a two-step reaction: L-aspartate is first activated by ATP to form Asp-AMP and then transferred to the acceptor end of tRNA(Asp). This Listeria monocytogenes serovar 1/2a (strain ATCC BAA-679 / EGD-e) protein is Aspartate--tRNA ligase.